Here is an 859-residue protein sequence, read N- to C-terminus: Probable helicase A859L (859 aa).

One can recognise a Helicase ATP-binding domain in the interval 178-349 (YQELQRSGRA…KNRELFGGVA (172 aa)). 191 to 198 (MACRCGKT) provides a ligand contact to ATP. Positions 298–301 (DECH) match the DEAH box motif. Residues 394-553 (QIIMALAYLK…RFYEHLLNPS (160 aa)) form the Helicase C-terminal domain.

Belongs to the asfivirus helicase A859L family.

The chain is Probable helicase A859L from African swine fever virus (isolate Pig/Kenya/KEN-50/1950) (ASFV).